We begin with the raw amino-acid sequence, 464 residues long: Protein FAM90A22 (464 aa).

3 disordered regions span residues 1–43 (MMAR…PRLK), 70–389 (PATL…HDGA), and 415–437 (HSPEKPGAFLAQSPHVSEKSEAP). 2 stretches are compositionally biased toward basic and acidic residues: residues 74–89 (GKKEGKENLKPWKPRA) and 97–114 (NKDKGEKEERPRQQDPQR). The span at 182–197 (SLSPLRKTSLSSSSSL) shows a compositional bias: low complexity.

The protein belongs to the FAM90 family.

The chain is Protein FAM90A22 from Homo sapiens (Human).